The chain runs to 295 residues: G1/S-specific cyclin-D1 (295 aa).

Positions 28-152 (LRAMLKTEET…LLVNKLKWNL (125 aa)) constitute a Cyclin N-terminal domain. Residues 262-283 (AQQNVDPKATEEEGEVEEEAGL) are disordered. A Glycyl lysine isopeptide (Lys-Gly) (interchain with G-Cter in ubiquitin) cross-link involves residue lysine 269. Threonine 286 carries the post-translational modification Phosphothreonine.

The protein belongs to the cyclin family. Cyclin D subfamily. In terms of assembly, interacts with either CDK4 or CDK6 protein kinase to form a serine/threonine kinase holoenzyme complex. The cyclin subunit imparts substrate specificity to the complex. Component of the ternary complex CCND1/CDK4/CDKN1B required for nuclear translocation and modulation of CDK4-mediated kinase activity. Interacts directly with CDKN1B. Can form similar complexes with either CDKN1A or CDKN2A. Interacts with UHRF2; the interaction ubiquitinates CCND1 and appears to occur independently of phosphorylation. Interacts with USP2. Interacts (via cyclin N-terminal domain) with INSM1 (via N-terminal region); the interaction competes with the binding of CCND1 to CDK4 during cell cycle progression and inhibits CDK4 activity. Interacts with CDK4; the interaction is prevented with the binding of CCND1 to INSM1 during cell cycle progression. Phosphorylation at Thr-286 by MAP kinases is required for ubiquitination and degradation by the DCX(AMBRA1) complex. It also plays an essential role for recognition by the FBXO31 component of SCF (SKP1-cullin-F-box) protein ligase complex following DNA damage. Post-translationally, ubiquitinated at Lys-269 by the DCX(AMBRA1) complex during the transition from G1 to S cell phase, leading to its degradation: ubiquitination is dependent on Thr-286 phosphorylation. The DCX(AMBRA1) complex represents the major regulator of CCND1 stability during the G1/S transition. Also ubiquitinated by the SCF(FBXO4) and Cul7-RING(FBXW8) ubiquitin-protein ligase complexes. Following DNA damage it is ubiquitinated by the SCF(FBXO31) protein ligase complex. SCF(FBXO31) ubiquitination is dependent on Thr-286 phosphorylation. Ubiquitinated also by UHRF2 apparently in a phosphorylation-independent manner. Ubiquitination leads to its degradation and G1 arrest. Deubiquitinated by USP2; leading to its stabilization. As to expression, expressed in the intestinal epithelium.

The protein resides in the nucleus. Its subcellular location is the cytoplasm. The protein localises to the nucleus membrane. Regulatory component of the cyclin D1-CDK4 (DC) complex that phosphorylates and inhibits members of the retinoblastoma (RB) protein family including RB1 and regulates the cell-cycle during G(1)/S transition. Phosphorylation of RB1 allows dissociation of the transcription factor E2F from the RB/E2F complex and the subsequent transcription of E2F target genes which are responsible for the progression through the G(1) phase. Hypophosphorylates RB1 in early G(1) phase. Cyclin D-CDK4 complexes are major integrators of various mitogenenic and antimitogenic signals. Also a substrate for SMAD3, phosphorylating SMAD3 in a cell-cycle-dependent manner and repressing its transcriptional activity. Component of the ternary complex, cyclin D1/CDK4/CDKN1B, required for nuclear translocation and activity of the cyclin D-CDK4 complex. Exhibits transcriptional corepressor activity with INSM1 on the NEUROD1 and INS promoters in a cell cycle-independent manner. This Mus musculus (Mouse) protein is G1/S-specific cyclin-D1 (Ccnd1).